The sequence spans 779 residues: Endonuclease MutS2 (779 aa).

ATP is bound at residue 328–335 (GPNTGGKT). Residues 704 to 779 (LDLRGKRYEE…GSGATIVTLG (76 aa)) enclose the Smr domain.

This sequence belongs to the DNA mismatch repair MutS family. MutS2 subfamily. In terms of assembly, homodimer. Binds to stalled ribosomes, contacting rRNA.

Endonuclease that is involved in the suppression of homologous recombination and thus may have a key role in the control of bacterial genetic diversity. Its function is as follows. Acts as a ribosome collision sensor, splitting the ribosome into its 2 subunits. Detects stalled/collided 70S ribosomes which it binds and splits by an ATP-hydrolysis driven conformational change. Acts upstream of the ribosome quality control system (RQC), a ribosome-associated complex that mediates the extraction of incompletely synthesized nascent chains from stalled ribosomes and their subsequent degradation. Probably generates substrates for RQC. The sequence is that of Endonuclease MutS2 from Streptococcus pyogenes serotype M49 (strain NZ131).